Here is a 248-residue protein sequence, read N- to C-terminus: 5'-nucleotidase SurE (248 aa).

Positions 8, 9, 39, and 91 each coordinate a divalent metal cation.

The protein belongs to the SurE nucleotidase family. A divalent metal cation is required as a cofactor.

Its subcellular location is the cytoplasm. The enzyme catalyses a ribonucleoside 5'-phosphate + H2O = a ribonucleoside + phosphate. In terms of biological role, nucleotidase that shows phosphatase activity on nucleoside 5'-monophosphates. In Neisseria meningitidis serogroup C (strain 053442), this protein is 5'-nucleotidase SurE.